The chain runs to 191 residues: Guanylate kinase (191 aa).

Residues 4 to 182 form the Guanylate kinase-like domain; that stretch reads GRLIVVSGPS…AREEMIEIMR (179 aa). Residue 11–18 coordinates ATP; the sequence is GPSGAGKS.

This sequence belongs to the guanylate kinase family.

It localises to the cytoplasm. The enzyme catalyses GMP + ATP = GDP + ADP. In terms of biological role, essential for recycling GMP and indirectly, cGMP. The sequence is that of Guanylate kinase from Rubrobacter xylanophilus (strain DSM 9941 / JCM 11954 / NBRC 16129 / PRD-1).